Reading from the N-terminus, the 116-residue chain is Ribonuclease P protein component (116 aa).

Belongs to the RnpA family. As to quaternary structure, consists of a catalytic RNA component (M1 or rnpB) and a protein subunit.

The catalysed reaction is Endonucleolytic cleavage of RNA, removing 5'-extranucleotides from tRNA precursor.. Functionally, RNaseP catalyzes the removal of the 5'-leader sequence from pre-tRNA to produce the mature 5'-terminus. It can also cleave other RNA substrates such as 4.5S RNA. The protein component plays an auxiliary but essential role in vivo by binding to the 5'-leader sequence and broadening the substrate specificity of the ribozyme. This chain is Ribonuclease P protein component, found in Geobacillus sp. (strain WCH70).